The chain runs to 448 residues: Selenide, water dikinase 2 (448 aa).

Ala-2 carries the post-translational modification N-acetylalanine. Ser-46 bears the Phosphoserine mark. Residue Sec-60 is part of the active site. Position 60 (Sec-60) is a non-standard amino acid, selenocysteine. An ATP-binding site is contributed by Lys-63. The interval 85-107 (LGRGLVGGQEEASQEAGLPAGAG) is disordered. Ser-97 carries the phosphoserine modification. ATP-binding positions include 118–120 (GMD), Asp-138, Asp-161, and 212–215 (GGQT). Asp-120 provides a ligand contact to Mg(2+). Mg(2+) is bound at residue Asp-161. A Mg(2+)-binding site is contributed by Asp-316.

It belongs to the selenophosphate synthase 1 family. Class I subfamily. In terms of assembly, homodimer. The cofactor is Mg(2+). In terms of processing, truncated SEPHS2 proteins produced by failed UGA/Sec decoding are ubiquitinated by the CRL2(KLHDC3) complex, which recognizes the glycine (Gly) at the C-terminus of truncated SEPHS2 proteins.

It carries out the reaction hydrogenselenide + ATP + H2O = selenophosphate + AMP + phosphate + 2 H(+). Functionally, synthesizes selenophosphate from selenide and ATP. This chain is Selenide, water dikinase 2 (SEPHS2), found in Homo sapiens (Human).